The following is a 2310-amino-acid chain: MGFLRQIQLLLWKNWTLRKRQKIRFVVELVWPLSLFLVLIWLRNANPLYSQHECHFPNKAMPSAGLLPWLQGIFCNMNNPCFQNPTPGESPGTVSNYNNSILARVYRDFQELFMDTPEVQHLGQVWAELRTLSQFMDTLRTHPERFAGRGLQIRDILKDEEALTLFLMRNIGLSDSVAHLLVNSQVRVEQFAYGVPDLELTDIACSEALLQRFIIFSQRRGAQTVRDALCPLSQVTLQWIEDTLYADVDFFKLFHVLPTLLDSSSQGINLRFWGGILSDLSPRMQKFIHRPSVQDLLWVSRPLLQNGGPETFTQLMSILSDLLCGYPEGGGSRVFSFNWYEDNNYKAFLGIDSTRKDPAYSYDKRTTSFCNSLIQSLESNPLTKIAWRAAKPLLMGKILFTPDSPAARRIMKNANSTFEELDRVRKLVKAWEEVGPQIWYFFEKSTQMTVIRDTLQHPTVKDFINRQLGEEGITTEAVLNFFSNGPQEKQADDMTSFDWRDIFNITDRFLRLANQYLECLVLDKFESYDDEVQLTQRALSLLEENRFWAGVVFPGMYPWASSLPPHVKYKIRMDIDVVEKTNKIKDRYWDSGPRADPVEDFRYIWGGFAYLQDMVEQGIVKSQMQAEPPIGVYLQQMPYPCFVDDSFMIILNRCFPIFMVLAWIYSVSMTVKGIVLEKELRLKETLKNQGVSNAVIWCTWFLDSFSIMALSIFLLTLFIMHGRILHYSDPFILFLFLLAFATATIMQSFLLSTLFSKASLAAACSGVIYFTLYLPHVLCFAWQDRMTADLKTTVSLLSSVAFGFGTEYLVRFEEQGLGLQWSNIGKSPLEGDEFSFLLSMKMMLLDAALYGLLAWYLDQVFPGDYGTPLPWYFLLQESYWLGGEGCSTREERALEKTEPLTEEMEDPEHPEGMNDSFFERELPGLVPGVCVKNLVKVFEPSGRPAVDRLNITFYENQITAFLGHNGAGKTTTLSILTGLLPPTSGTVLIGGKDIETNLDVVRQSLGMCPQHNILFHHLTVAEHILFYAQLKGRSWEEAQLEMEAMLEDTGLHHKRNEEAQDLSGGMQRKLSVAIAFVGDSKVVVLDEPTSGVDPYSRRSIWDLLLKYRSGRTIIMSTHHMDEADLLGDRIAIISQGRLYCSGTPLFLKNCFGTGFYLTLVRKMKNIQSQRGGCEGVCSCTSKGFSTRCPTRVDEITEEQVLDGDVQELMDLVYHHVPEAKLVECIGQELIFLLPNKNFKQRAYASLFRELEETLADLGLSSFGISDTPLEEIFLKVTEDAGAGSMFVGGAQQKREQAGLRHPCSAPTEKLRQYAQAPHTCSPGQVDPPKGQPSPEPEDPGVPFNTGARLILQHVQALLVKRFHHTIRSRKDFVAQIVLPATFVFLALMLSIIVPPFGEFPALTLHPWMYGHQYTFFSMDEPNNEHLEVLADVLLNRPGFGNRCLKEEWLPEYPCINATSWKTPSVSPNITHLFQKQKWTAAHPSPSCKCSTREKLTMLPECPEGAGGLPPPQRTQRSTEVLQDLTNRNISDYLVKTYPALIRSSLKSKFWVNEQRYGGISIGGKLPAIPISGEALVGFLSGLGQMMNVSGGPVTREASKEMLDFLKHLETTDNIKVWFNNKGWHALVSFLNVAHNAILRASLPRDRDPEEYGITVISQPLNLTKEQLSDITVLTTSVDAVVAICVIFAMSFVPASFVLYLIQERVTKAKHLQFISGVSPTTYWLTNFLWDIMNYAVSAGLVVGIFIGFQKKAYTSPDNLPALVSLLMLYGWAVIPMMYPASFLFEVPSTAYVALSCANLFIGINSSAITFVLELFENNRTLLRFNAMLRKLLIVFPHFCLGRGLIDLALSQAVTDVYAQFGEEYSANPFQWDLIGKNLVAMAIEGVVYFLLTLLIQHHFFLTRWIAEPAREPVFDEDDDVAEERQRVMSGGNKTDILKLNELTKVYSGSSSPAVDRLCVGVRPGECFGLLGVNGAGKTTTFKMLTGDTTVTSGDATVAGKSILTSISDVHQNMGYCPQFDAIDDLLTGREHLYLYARLRGVPSKEIEKVANWGIQSLGLSLYADRLAGTYSGGNKRKLSTAIALTGCPPLLLLDEPTTGMDPQARRMLWNTIVSIIREGRAVVLTSHSMEECEALCTRLAIMVKGTFQCLGTIQHLKYKFGDGYIVTMKIKSPKDDLLPDLNPVEQFFQGNFPGSVQRERHHSMLQFQVPSSSLARIFQLLISHKDSLLIEEYSVTQTTLDQVFVNFAKQQTETYDLPLHPRAAGASWQAKLEEKSGRLQTQEPLPAGSEQLANGSNPTAAEDKHTRSPQ.

Over 1–21 the chain is Cytoplasmic; that stretch reads MGFLRQIQLLLWKNWTLRKRQ. Residues 22–42 traverse the membrane as a helical segment; sequence KIRFVVELVWPLSLFLVLIWL. Residues 43–646 lie on the Extracellular side of the membrane; the sequence is RNANPLYSQH…MPYPCFVDDS (604 aa). 2 disulfides stabilise this stretch: Cys54–Cys81 and Cys75–Cys324. The N-linked (GlcNAc...) asparagine glycan is linked to Asn98. Positions 336 and 338 each coordinate Mg(2+). Residues Cys370 and Cys519 are joined by a disulfide bond. Asn415 and Asn504 each carry an N-linked (GlcNAc...) asparagine glycan. 2 residues coordinate an N-all-trans-retinylidenephosphatidylethanolamine: Arg587 and Arg653. Cystine bridges form between Cys641–Cys1489, Cys1443–Cys1454, and Cys1487–Cys1501. Residues 647 to 667 traverse the membrane as a helical segment; it reads FMIILNRCFPIFMVLAWIYSV. Topologically, residues 668–699 are cytoplasmic; it reads SMTVKGIVLEKELRLKETLKNQGVSNAVIWCT. The chain crosses the membrane as a helical span at residues 700-720; sequence WFLDSFSIMALSIFLLTLFIM. The Extracellular segment spans residues 721 to 730; sequence HGRILHYSDP. The helical transmembrane segment at 731–751 threads the bilayer; the sequence is FILFLFLLAFATATIMQSFLL. Residues 752–759 lie on the Cytoplasmic side of the membrane; sequence STLFSKAS. The chain crosses the membrane as a helical span at residues 760-780; the sequence is LAAACSGVIYFTLYLPHVLCF. The Extracellular segment spans residues 781-835; that stretch reads AWQDRMTADLKTTVSLLSSVAFGFGTEYLVRFEEQGLGLQWSNIGKSPLEGDEFS. The helical transmembrane segment at 836 to 856 threads the bilayer; the sequence is FLLSMKMMLLDAALYGLLAWY. Residues 857–1375 lie on the Cytoplasmic side of the membrane; it reads LDQVFPGDYG…IRSRKDFVAQ (519 aa). A disordered region spans residues 891-910; that stretch reads ERALEKTEPLTEEMEDPEHP. At Thr901 the chain carries Phosphothreonine. The ABC transporter 1 domain maps to 929–1160; sequence VCVKNLVKVF…FGTGFYLTLV (232 aa). ATP contacts are provided by Phe938, Gly966, and Lys969. Thr970 serves as a coordination point for Mg(2+). Residues Thr971, Gln1010, Lys1054, Gly1064, Gly1065, and His1118 each contribute to the ATP site. A Phosphoserine modification is found at Ser1185. The interval 1311 to 1344 is disordered; the sequence is RQYAQAPHTCSPGQVDPPKGQPSPEPEDPGVPFN. A helical transmembrane segment spans residues 1376 to 1396; sequence IVLPATFVFLALMLSIIVPPF. Residues 1397–1726 lie on the Extracellular side of the membrane; the sequence is GEFPALTLHP…VSPTTYWLTN (330 aa). N-linked (GlcNAc...) asparagine glycosylation occurs at Asn1468. N-linked (GlcNAc...) asparagine glycosylation is found at Asn1528, Asn1587, and Asn1661. The chain crosses the membrane as a helical span at residues 1727-1747; that stretch reads FLWDIMNYAVSAGLVVGIFIG. The Cytoplasmic segment spans residues 1748–1758; it reads FQKKAYTSPDN. The helical transmembrane segment at 1759–1779 threads the bilayer; that stretch reads LPALVSLLMLYGWAVIPMMYP. Residues 1780–1791 are Extracellular-facing; that stretch reads ASFLFEVPSTAY. Residues 1792-1812 form a helical membrane-spanning segment; it reads VALSCANLFIGINSSAITFVL. Over 1813–1830 the chain is Cytoplasmic; the sequence is ELFENNRTLLRFNAMLRK. Residues 1831 to 1851 traverse the membrane as a helical segment; that stretch reads LLIVFPHFCLGRGLIDLALSQ. The Extracellular portion of the chain corresponds to 1852–1872; sequence AVTDVYAQFGEEYSANPFQWD. A helical transmembrane segment spans residues 1873–1893; that stretch reads LIGKNLVAMAIEGVVYFLLTL. At 1894–2310 the chain is on the cytoplasmic side; the sequence is LIQHHFFLTR…AEDKHTRSPQ (417 aa). An ABC transporter 2 domain is found at 1937-2169; it reads LKLNELTKVY…FGDGYIVTMK (233 aa). Residues Asn1973, Gly1974, Lys1977, Thr1978, Thr1979, and Gly2072 each coordinate ATP. Residue Thr1978 participates in Mg(2+) binding. An essential for ATP binding and ATPase activity region spans residues 2243 to 2248; the sequence is VFVNFA. The segment at 2266-2310 is disordered; sequence ASWQAKLEEKSGRLQTQEPLPAGSEQLANGSNPTAAEDKHTRSPQ. Over residues 2301–2310 the composition is skewed to basic and acidic residues; the sequence is AEDKHTRSPQ.

Belongs to the ABC transporter superfamily. ABCA family. In terms of processing, N-glycosylated. Proteolytic cleavage by trypsin leads to a 120-kDa N-terminal fragment and a 115-kDa C-terminal fragment that are linked through disulfide bonds. Post-translationally, phosphorylation is independent of light exposure and modulates ATPase activity. Retinal-specific. Seems to be exclusively found in the rims of rod photoreceptor cells.

Its subcellular location is the membrane. It localises to the endoplasmic reticulum. It is found in the cell projection. The protein resides in the cilium. The protein localises to the photoreceptor outer segment. The catalysed reaction is an N-all-trans-retinylidenephosphatidylethanolamine(out) + ATP + H2O = an N-all-trans-retinylidenephosphatidylethanolamine(in) + ADP + phosphate + H(+). It carries out the reaction ATP + H2O + phospholipidSide 1 = ADP + phosphate + phospholipidSide 2.. It catalyses the reaction a 1,2-diacyl-sn-glycero-3-phosphoethanolamine(out) + ATP + H2O = a 1,2-diacyl-sn-glycero-3-phosphoethanolamine(in) + ADP + phosphate + H(+). The enzyme catalyses N-11-cis-retinylidenephosphatidylethanolamine(out) + ATP + H2O = N-11-cis-retinylidenephosphatidylethanolamine(in) + ADP + phosphate + H(+). The catalysed reaction is ATP + H2O = ADP + phosphate + H(+). Its activity is regulated as follows. ATPase activity is decreased by cholesterol and ceramide. Phospholipids translocase activity is highly reduced by berylium fluoride and aluminum floride. N-ethylmaleimide inhibits phospholipid translocase activity. Its function is as follows. Flippase that catalyzes in an ATP-dependent manner the transport of retinal-phosphatidylethanolamine conjugates like the 11-cis and all-trans isomers of N-retinylidene-phosphatidylethanolamine from the lumen to the cytoplasmic leaflet of photoreceptor outer segment disk membranes, where N-cis-retinylidene-phosphatidylethanolamine (N-cis-R-PE) is then isomerized to its all-trans isomer (N-trans-R-PE) and reduced by RDH8 to produce all-trans-retinol (all-trans-rol) and therefore prevents the accumulation of excess of 11-cis-retinal and its schiff-base conjugate and the formation of toxic bisretinoid. Displays ATPase activity in vitro in absence of retinal substrate. May display GTPase activity that is strongly influenced by the lipid environment and the presence of retinoid compounds. Binds the unprotonated form of N-retinylidene-phosphatidylethanolamine with high affinity in the absence of ATP and ATP binding and hydrolysis induce a protein conformational change that causes the dissociation of N-retinylidene-phosphatidylethanolamine. The sequence is that of Retinal-specific phospholipid-transporting ATPase ABCA4 from Mus musculus (Mouse).